Consider the following 324-residue polypeptide: Fructose-1,6-bisphosphatase class 1 (324 aa).

The Mg(2+) site is built by Glu88, Asp107, Leu109, and Asp110. Substrate is bound by residues 110 to 113 (DGSS), Asn199, and Lys265. Glu271 is a binding site for Mg(2+).

Belongs to the FBPase class 1 family. Homotetramer. The cofactor is Mg(2+).

It is found in the cytoplasm. The catalysed reaction is beta-D-fructose 1,6-bisphosphate + H2O = beta-D-fructose 6-phosphate + phosphate. The protein operates within carbohydrate biosynthesis; gluconeogenesis. In Neisseria gonorrhoeae (strain ATCC 700825 / FA 1090), this protein is Fructose-1,6-bisphosphatase class 1.